Consider the following 107-residue polypeptide: Protein Rev (107 aa).

A Phosphoserine; by host CK2 modification is found at S5. Positions 18 to 26 (AIKILYQSN) are homomultimerization. Disordered regions lie at residues 24–48 (QSNP…WRAR) and 82–107 (HLDC…VGRS). The Nuclear localization signal and RNA-binding (RRE) motif lies at 34–50 (TRQARRNRRRRWRARQR). Residues 36-48 (QARRNRRRRWRAR) show a composition bias toward basic residues. The short motif at 73 to 84 (LQLPPLERLHLD) is the Nuclear export signal and binding to XPO1 element. Positions 88 to 101 (DSGTSGTQQPQGTE) are enriched in polar residues. S92 is modified (phosphoserine; by host).

It belongs to the HIV-1 REV protein family. In terms of assembly, homomultimer; when bound to the RRE. Multimeric assembly is essential for activity and may involve XPO1. Binds to human KPNB1, XPO1, TNPO1, RANBP5 and IPO7. Interacts with the viral Integrase. Interacts with human KHDRBS1. Interacts with human NAP1; this interaction decreases Rev multimerization and stimulates its activity. Interacts with human DEAD-box helicases DDX3 and DDX24; these interactions may serve for viral RNA export to the cytoplasm and packaging, respectively. Interacts with human PSIP1; this interaction may inhibit HIV-1 DNA integration by promoting dissociation of the Integrase-LEDGF/p75 complex. Asymmetrically arginine dimethylated at one site by host PRMT6. Methylation impairs the RNA-binding activity and export of viral RNA from the nucleus to the cytoplasm. Post-translationally, phosphorylated by protein kinase CK2. Presence of, and maybe binding to the N-terminus of the regulatory beta subunit of CK2 is necessary for CK2-mediated Rev's phosphorylation.

Its subcellular location is the host nucleus. The protein resides in the host nucleolus. It is found in the host cytoplasm. Escorts unspliced or incompletely spliced viral pre-mRNAs (late transcripts) out of the nucleus of infected cells. These pre-mRNAs carry a recognition sequence called Rev responsive element (RRE) located in the env gene, that is not present in fully spliced viral mRNAs (early transcripts). This function is essential since most viral proteins are translated from unspliced or partially spliced pre-mRNAs which cannot exit the nucleus by the pathway used by fully processed cellular mRNAs. Rev itself is translated from a fully spliced mRNA that readily exits the nucleus. Rev's nuclear localization signal (NLS) binds directly to KPNB1/Importin beta-1 without previous binding to KPNA1/Importin alpha-1. KPNB1 binds to the GDP bound form of RAN (Ran-GDP) and targets Rev to the nucleus. In the nucleus, the conversion from Ran-GDP to Ran-GTP dissociates Rev from KPNB1 and allows Rev's binding to the RRE in viral pre-mRNAs. Rev multimerization on the RRE via cooperative assembly exposes its nuclear export signal (NES) to the surface. Rev can then form a complex with XPO1/CRM1 and Ran-GTP, leading to nuclear export of the complex. Conversion from Ran-GTP to Ran-GDP mediates dissociation of the Rev/RRE/XPO1/RAN complex, so that Rev can return to the nucleus for a subsequent round of export. Beside KPNB1, also seems to interact with TNPO1/Transportin-1, RANBP5/IPO5 and IPO7/RANBP7 for nuclear import. The nucleoporin-like HRB/RIP is an essential cofactor that probably indirectly interacts with Rev to release HIV RNAs from the perinuclear region to the cytoplasm. In Human immunodeficiency virus type 1 group M subtype G (isolate SE6165) (HIV-1), this protein is Protein Rev.